Here is a 306-residue protein sequence, read N- to C-terminus: Ribokinase (306 aa).

Substrate-binding positions include 12-14 (NAD), 40-44 (GKGAN), and glutamate 141. ATP-binding positions include asparagine 185 and 221-226 (TLGAKG). K(+) is bound by residues aspartate 247 and threonine 249. 252-253 (GD) is a binding site for ATP. Aspartate 253 provides a ligand contact to substrate. Aspartate 253 serves as the catalytic Proton acceptor. K(+)-binding residues include serine 283, lysine 286, glycine 288, and serine 292.

The protein belongs to the carbohydrate kinase PfkB family. Ribokinase subfamily. As to quaternary structure, homodimer. It depends on Mg(2+) as a cofactor.

The protein localises to the cytoplasm. It catalyses the reaction D-ribose + ATP = D-ribose 5-phosphate + ADP + H(+). It functions in the pathway carbohydrate metabolism; D-ribose degradation; D-ribose 5-phosphate from beta-D-ribopyranose: step 2/2. With respect to regulation, activated by a monovalent cation that binds near, but not in, the active site. The most likely occupant of the site in vivo is potassium. Ion binding induces a conformational change that may alter substrate affinity. In terms of biological role, catalyzes the phosphorylation of ribose at O-5 in a reaction requiring ATP and magnesium. The resulting D-ribose-5-phosphate can then be used either for sythesis of nucleotides, histidine, and tryptophan, or as a component of the pentose phosphate pathway. In Haemophilus influenzae (strain ATCC 51907 / DSM 11121 / KW20 / Rd), this protein is Ribokinase.